The primary structure comprises 860 residues: MPAKASLEGIEKVWSRVWEQNGTYRFDRSVTRSEVYSVDTPPPTVSGALHVGHVFSYTHSDAIARFQRMRGRAVFYPMGWDDNGLPTERRVQNYYGVRCDPSLPYDPGYTPPAEPPSRPQPISRRNFVELCRNLTELDEQAFEALWRHLGLSVDWSLTYATIDDRSRAISQRAFLRNLARGEAYLADAPTLWDVTFRTAVAQAELEDRERQGTYYRLAFHSATGDKIYVETTRPELLPACVALVAHPDDERYQHLLGSTAVSPLFGVPVPIRAHPLAQPDKGSGIAMICTFGDLTDVLWWRELALPTRPVMGRDGRLLPEPPPGIVNADAVAAYQTLAGLTAFSAKAKVVELLRAAGDLEIAPRPTTQTVKFYEKGDKPLEIITTRQWYVRNGGRDTELRSALVHRGRELTWSPEFMRSRYENWVEGLSGDWVISRQRFFGVPIPVWYPLDDSGEPDYAHPILPDDVALPVDPSSDAPTGYQESQRNQPGGFMADPDVMDTWATSSLTPEIAGGWTVDDDLFARVFPMDLRPQAHEIIRTWLFATVLRSHQEFNCLPWTTVLLSGWILDPDRKKMSKSKGNTVTPMALLEKYGSDAVRYWAVSGRPGTDTAFDTGQMKIGRRLAIKILNATTFVLRFGSPTLLAPHMAHVTEPLDRSMLARLASVVDSATTGFTQHDYTRSLECTEQFFWSFCDDYLELVKERAYGEPDDRAVRSAHAALALALHTLLRLFAPMLPFVTEEAWSWWQEGSVHRAAWPTGQELVGPDVSAEANRSTEASGSGEAGTDLLGLASDVLAAIRRAKSEAKQSMRAPVAQLTLRGRASDLAAFALVSRDVRAAGVVREVDTAEADTPLTPEITLG.

The 'HIGH' region motif lies at 43–53 (PTVSGALHVGH). Residues 469 to 491 (LPVDPSSDAPTGYQESQRNQPGG) are disordered. A 'KMSKS' region motif is present at residues 574 to 578 (KMSKS). Lys-577 serves as a coordination point for ATP.

This sequence belongs to the class-I aminoacyl-tRNA synthetase family. ValS type 2 subfamily. As to quaternary structure, monomer.

It localises to the cytoplasm. It carries out the reaction tRNA(Val) + L-valine + ATP = L-valyl-tRNA(Val) + AMP + diphosphate. Functionally, catalyzes the attachment of valine to tRNA(Val). As ValRS can inadvertently accommodate and process structurally similar amino acids such as threonine, to avoid such errors, it has a 'posttransfer' editing activity that hydrolyzes mischarged Thr-tRNA(Val) in a tRNA-dependent manner. In Salinispora tropica (strain ATCC BAA-916 / DSM 44818 / JCM 13857 / NBRC 105044 / CNB-440), this protein is Valine--tRNA ligase.